The sequence spans 211 residues: LexA repressor (211 aa).

Residues 31–51 (RAEISKELGFRSPNAAEEHLK) constitute a DNA-binding region (H-T-H motif). Catalysis depends on for autocatalytic cleavage activity residues S127 and K164.

Belongs to the peptidase S24 family. Homodimer.

It carries out the reaction Hydrolysis of Ala-|-Gly bond in repressor LexA.. Represses a number of genes involved in the response to DNA damage (SOS response), including recA and lexA. In the presence of single-stranded DNA, RecA interacts with LexA causing an autocatalytic cleavage which disrupts the DNA-binding part of LexA, leading to derepression of the SOS regulon and eventually DNA repair. This chain is LexA repressor, found in Pasteurella multocida (strain Pm70).